Reading from the N-terminus, the 85-residue chain is Putative regulatory protein THEYE_A0405 (85 aa).

Belongs to the RemA family.

The sequence is that of Putative regulatory protein THEYE_A0405 from Thermodesulfovibrio yellowstonii (strain ATCC 51303 / DSM 11347 / YP87).